Reading from the N-terminus, the 317-residue chain is Olfactory receptor 5K17 (317 aa).

Residues 1–28 (MMKANHSLTVEFILIGFSDHTDLKTLLF) are Extracellular-facing. Asparagine 5 is a glycosylation site (N-linked (GlcNAc...) asparagine). A helical transmembrane segment spans residues 29-49 (LLFSAIYLVTIVGNLGLVALI). Over 50–56 (YMEPRLH) the chain is Cytoplasmic. Residues 57–77 (TPMYIFLGNLALMDSCCSCAI) form a helical membrane-spanning segment. The Extracellular segment spans residues 78 to 93 (TPKMLENFFSVDRRIS). The helical transmembrane segment at 94 to 114 (LYECMVQFYFLCLAETADCFL) threads the bilayer. A disulfide bridge links cysteine 97 with cysteine 189. Topologically, residues 115 to 144 (LAAMAYDRYVAICNPLQYHTMMSKKLSIQM) are cytoplasmic. The helical transmembrane segment at 145–165 (SIGTFIASNLHSLIHTGCLLR) threads the bilayer. The Extracellular segment spans residues 166 to 198 (LNFCKSRRIDHFFCDILPLYKLSCTDPFINELM). A helical transmembrane segment spans residues 199-219 (LYIFSMPIQVFTITTVLVSYS). Over 220-239 (CILLTVFKMKSKDGRGKAFS) the chain is Cytoplasmic. The helical transmembrane segment at 240 to 259 (TCASHFFSVSIFYICLLMYI) threads the bilayer. Over 260–268 (GPSKNSNKD) the chain is Extracellular. A helical transmembrane segment spans residues 269–289 (IPVGVFYTIVIPLLNPFIYSL). The Cytoplasmic portion of the chain corresponds to 290-317 (RNKEVVNAVKKVMKTHSIFKNSSASIAH).

This sequence belongs to the G-protein coupled receptor 1 family.

It is found in the cell membrane. Potential odorant receptor. In Mus musculus (Mouse), this protein is Olfactory receptor 5K17.